A 376-amino-acid polypeptide reads, in one-letter code: Probable ribonucleoside-diphosphate reductase small subunit 048L (376 aa).

D110, E140, and H143 together coordinate Fe cation. The active site involves Y147. The Fe cation site is built by E217, E251, and H254.

It belongs to the ribonucleoside diphosphate reductase small chain family. As to quaternary structure, heterotetramer composed of a homodimer of the large subunit (R1) and a homodimer of the small subunit (R2). Larger multisubunit protein complex are also active, composed of (R1)n(R2)n. Requires Fe cation as cofactor.

It catalyses the reaction a 2'-deoxyribonucleoside 5'-diphosphate + [thioredoxin]-disulfide + H2O = a ribonucleoside 5'-diphosphate + [thioredoxin]-dithiol. Its function is as follows. Ribonucleoside-diphosphate reductase holoenzyme provides the precursors necessary for viral DNA synthesis. Allows virus growth in non-dividing cells. Catalyzes the biosynthesis of deoxyribonucleotides from the corresponding ribonucleotides. The polypeptide is Probable ribonucleoside-diphosphate reductase small subunit 048L (Invertebrate iridescent virus 3 (IIV-3)).